Here is a 406-residue protein sequence, read N- to C-terminus: 2,3-bisphosphoglycerate-independent phosphoglycerate mutase (406 aa).

Residues 156–165 are compositionally biased toward basic and acidic residues; that stretch reads ITEGDPHKEG. The tract at residues 156 to 177 is disordered; it reads ITEGDPHKEGVPIPEVKPLDNS.

The protein belongs to the BPG-independent phosphoglycerate mutase family. A-PGAM subfamily.

It catalyses the reaction (2R)-2-phosphoglycerate = (2R)-3-phosphoglycerate. Its pathway is carbohydrate degradation; glycolysis; pyruvate from D-glyceraldehyde 3-phosphate: step 3/5. Functionally, catalyzes the interconversion of 2-phosphoglycerate and 3-phosphoglycerate. The chain is 2,3-bisphosphoglycerate-independent phosphoglycerate mutase from Methanococcus aeolicus (strain ATCC BAA-1280 / DSM 17508 / OCM 812 / Nankai-3).